Here is a 433-residue protein sequence, read N- to C-terminus: Enolase (433 aa).

Residue Q163 participates in (2R)-2-phosphoglycerate binding. Residue E205 is the Proton donor of the active site. Residues D242, E286, and D313 each contribute to the Mg(2+) site. K338, R367, S368, and K389 together coordinate (2R)-2-phosphoglycerate. Residue K338 is the Proton acceptor of the active site.

The protein belongs to the enolase family. Requires Mg(2+) as cofactor.

Its subcellular location is the cytoplasm. The protein localises to the secreted. It is found in the cell surface. The catalysed reaction is (2R)-2-phosphoglycerate = phosphoenolpyruvate + H2O. The protein operates within carbohydrate degradation; glycolysis; pyruvate from D-glyceraldehyde 3-phosphate: step 4/5. In terms of biological role, catalyzes the reversible conversion of 2-phosphoglycerate (2-PG) into phosphoenolpyruvate (PEP). It is essential for the degradation of carbohydrates via glycolysis. This Koribacter versatilis (strain Ellin345) protein is Enolase.